A 460-amino-acid polypeptide reads, in one-letter code: MALWGGRFSLAADRRFKQFNDSLRFDYRLAEQDIIGSVAWSRALVTVGVLTVQEQQQLVQALTALLEEVRTDPRSILDSDAEDIHSWVEQQLIGRVGDLGKKLHTGRSRNDQVATDLKLWCKDQGEMLRQALIALQQVLTACARQNQDAVMPGYTHLQRAQPITFAHWCMAYVEMLARDESRLDDALRRLNTSPLGSGALAGTAYPIDRDRLADWLGFSAATRNSLDSVSDRDHVLELLSAAAIGMVHLSRFAEDLIFFNSGEAGFIELSERVTSGSSLMPQKKNPDALELIRGKCGRVQGALSGMLMTLKGLPLAYNKDMQEDKEGLFDALDTWLDCLQMATLALDGLAVKRPRCAEAAQQGYANATELADYLVAKGIPFREAHHIVGEAVVAALAQGKPLEALPLEMLQSFSPVIGADIYPLLALDSCLVKRSARGGVAPQQVAQAIDDAQRRLGNIL.

Belongs to the lyase 1 family. Argininosuccinate lyase subfamily.

The protein localises to the cytoplasm. It catalyses the reaction 2-(N(omega)-L-arginino)succinate = fumarate + L-arginine. Its pathway is amino-acid biosynthesis; L-arginine biosynthesis; L-arginine from L-ornithine and carbamoyl phosphate: step 3/3. In Edwardsiella ictaluri (strain 93-146), this protein is Argininosuccinate lyase.